Here is a 123-residue protein sequence, read N- to C-terminus: Alpha-lactalbumin A (123 aa).

The C-type lysozyme domain maps to Lys1–Leu123. Intrachain disulfides connect Cys6–Cys120, Cys28–Cys111, Cys61–Cys77, and Cys73–Cys91. 5 residues coordinate Ca(2+): Lys79, Asp82, Asp84, Asp87, and Asp88.

This sequence belongs to the glycosyl hydrolase 22 family. Lactose synthase (LS) is a heterodimer of a catalytic component, beta1,4-galactosyltransferase (beta4Gal-T1) and a regulatory component, alpha-lactalbumin (LA). Mammary gland specific. Secreted in milk.

Its subcellular location is the secreted. In terms of biological role, regulatory subunit of lactose synthase, changes the substrate specificity of galactosyltransferase in the mammary gland making glucose a good acceptor substrate for this enzyme. This enables LS to synthesize lactose, the major carbohydrate component of milk. In other tissues, galactosyltransferase transfers galactose onto the N-acetylglucosamine of the oligosaccharide chains in glycoproteins. This Equus caballus (Horse) protein is Alpha-lactalbumin A.